The chain runs to 376 residues: Succinyl-diaminopimelate desuccinylase (376 aa).

A Zn(2+)-binding site is contributed by histidine 66. The active site involves aspartate 68. Aspartate 99 is a binding site for Zn(2+). Glutamate 133 functions as the Proton acceptor in the catalytic mechanism. Zn(2+) contacts are provided by glutamate 134, glutamate 162, and histidine 349.

Belongs to the peptidase M20A family. DapE subfamily. In terms of assembly, homodimer. The cofactor is Zn(2+). Co(2+) serves as cofactor.

It catalyses the reaction N-succinyl-(2S,6S)-2,6-diaminopimelate + H2O = (2S,6S)-2,6-diaminopimelate + succinate. The protein operates within amino-acid biosynthesis; L-lysine biosynthesis via DAP pathway; LL-2,6-diaminopimelate from (S)-tetrahydrodipicolinate (succinylase route): step 3/3. Functionally, catalyzes the hydrolysis of N-succinyl-L,L-diaminopimelic acid (SDAP), forming succinate and LL-2,6-diaminopimelate (DAP), an intermediate involved in the bacterial biosynthesis of lysine and meso-diaminopimelic acid, an essential component of bacterial cell walls. The sequence is that of Succinyl-diaminopimelate desuccinylase from Ruthia magnifica subsp. Calyptogena magnifica.